The primary structure comprises 334 residues: Putative heat shock protein HSP 90-alpha A5 (334 aa).

Residues Lys-55–Glu-107 form a disordered region. Basic and acidic residues predominate over residues Gln-59–Glu-69. Residues Glu-85–Glu-94 are compositionally biased toward acidic residues. Ser-89 is subject to Phosphoserine. A coiled-coil region spans residues Leu-234–Lys-267. The segment at Glu-314 to Gly-334 is disordered. The span at Gly-320–Gly-334 shows a compositional bias: basic and acidic residues. The short motif at Met-327–Gly-331 is the TPR repeat-binding element.

Belongs to the heat shock protein 90 family. As to quaternary structure, homodimer.

It is found in the cytoplasm. Its function is as follows. Putative molecular chaperone that may promote the maturation, structural maintenance and proper regulation of specific target proteins. The sequence is that of Putative heat shock protein HSP 90-alpha A5 (HSP90AA5P) from Homo sapiens (Human).